Consider the following 142-residue polypeptide: Large ribosomal subunit protein uL13 (142 aa).

It belongs to the universal ribosomal protein uL13 family. Part of the 50S ribosomal subunit.

In terms of biological role, this protein is one of the early assembly proteins of the 50S ribosomal subunit, although it is not seen to bind rRNA by itself. It is important during the early stages of 50S assembly. This is Large ribosomal subunit protein uL13 from Syntrophobacter fumaroxidans (strain DSM 10017 / MPOB).